The sequence spans 128 residues: Transcription antitermination protein NusB (128 aa).

Belongs to the NusB family.

Involved in transcription antitermination. Required for transcription of ribosomal RNA (rRNA) genes. Binds specifically to the boxA antiterminator sequence of the ribosomal RNA (rrn) operons. This Exiguobacterium sp. (strain ATCC BAA-1283 / AT1b) protein is Transcription antitermination protein NusB.